Here is a 202-residue protein sequence, read N- to C-terminus: NADH-quinone oxidoreductase subunit J (202 aa).

The next 5 helical transmembrane spans lie at 3 to 23 (VFVF…LMVV), 31 to 51 (AVLW…LMGA), 53 to 73 (FVAM…FLFV), 93 to 113 (PVGG…LMVW), and 146 to 166 (LYLF…AILL).

It belongs to the complex I subunit 6 family. NDH-1 is composed of 14 different subunits. Subunits NuoA, H, J, K, L, M, N constitute the membrane sector of the complex.

The protein resides in the cellular chromatophore membrane. It carries out the reaction a quinone + NADH + 5 H(+)(in) = a quinol + NAD(+) + 4 H(+)(out). In terms of biological role, NDH-1 shuttles electrons from NADH, via FMN and iron-sulfur (Fe-S) centers, to quinones in the respiratory chain. The immediate electron acceptor for the enzyme in this species is believed to be ubiquinone. Couples the redox reaction to proton translocation (for every two electrons transferred, four hydrogen ions are translocated across the cytoplasmic membrane), and thus conserves the redox energy in a proton gradient. The protein is NADH-quinone oxidoreductase subunit J (nuoJ) of Rhodobacter capsulatus (Rhodopseudomonas capsulata).